The following is a 236-amino-acid chain: Baculoviral IAP repeat-containing protein 8 (236 aa).

Residues 7-70 form a BIR repeat; that stretch reads WLITFGTWMY…KWYPGCKYLL (64 aa). The Zn(2+) site is built by Cys39, Cys42, His59, and Cys66. An RING-type zinc finger spans residues 189–224; the sequence is CKICMDRHIAVVFIPCGHLVTCKQCAEAVDRCPMCN.

This sequence belongs to the IAP family. In terms of assembly, binds to caspase-9.

The protein localises to the cytoplasm. Protects against apoptosis mediated by BAX. This chain is Baculoviral IAP repeat-containing protein 8 (BIRC8), found in Gorilla gorilla gorilla (Western lowland gorilla).